The sequence spans 255 residues: 5'-nucleotidase SurE (255 aa).

D13, D14, S44, and N100 together coordinate a divalent metal cation.

Belongs to the SurE nucleotidase family. The cofactor is a divalent metal cation.

The protein localises to the cytoplasm. It catalyses the reaction a ribonucleoside 5'-phosphate + H2O = a ribonucleoside + phosphate. Its function is as follows. Nucleotidase that shows phosphatase activity on nucleoside 5'-monophosphates. This Bacteroides fragilis (strain ATCC 25285 / DSM 2151 / CCUG 4856 / JCM 11019 / LMG 10263 / NCTC 9343 / Onslow / VPI 2553 / EN-2) protein is 5'-nucleotidase SurE.